A 247-amino-acid polypeptide reads, in one-letter code: GTP cyclohydrolase 1 type 2 homolog (247 aa).

A divalent metal cation-binding residues include histidine 63, histidine 64, aspartate 101, histidine 215, and glutamate 219.

This sequence belongs to the GTP cyclohydrolase I type 2/NIF3 family. Homohexamer.

The sequence is that of GTP cyclohydrolase 1 type 2 homolog from Buchnera aphidicola subsp. Acyrthosiphon pisum (strain APS) (Acyrthosiphon pisum symbiotic bacterium).